Here is a 102-residue protein sequence, read N- to C-terminus: Small ribosomal subunit protein uS10 (102 aa).

It belongs to the universal ribosomal protein uS10 family. As to quaternary structure, part of the 30S ribosomal subunit.

Involved in the binding of tRNA to the ribosomes. This Clavibacter michiganensis subsp. michiganensis (strain NCPPB 382) protein is Small ribosomal subunit protein uS10.